Reading from the N-terminus, the 33-residue chain is Dermaseptin DS VIII-like peptide (33 aa).

A33 is modified (alanine amide).

Expressed by the parotoid glands.

The protein resides in the secreted. Possesses a potent antimicrobial activity against bacteria, fungi and protozoa. Probably acts by disturbing membrane functions with its amphipathic structure. In Phyllomedusa burmeisteri (Brazilian common walking leaf frog), this protein is Dermaseptin DS VIII-like peptide.